Consider the following 142-residue polypeptide: uncharacterized protein (142 aa).

The 138-residue stretch at 1 to 138 folds into the N-acetyltransferase domain; it reads MLEKLAEAHP…SFMILVKPLA (138 aa).

This is an uncharacterized protein from Bacillus subtilis (strain 168).